Reading from the N-terminus, the 253-residue chain is Indole-3-glycerol phosphate synthase (253 aa).

This sequence belongs to the TrpC family.

The enzyme catalyses 1-(2-carboxyphenylamino)-1-deoxy-D-ribulose 5-phosphate + H(+) = (1S,2R)-1-C-(indol-3-yl)glycerol 3-phosphate + CO2 + H2O. It functions in the pathway amino-acid biosynthesis; L-tryptophan biosynthesis; L-tryptophan from chorismate: step 4/5. The protein is Indole-3-glycerol phosphate synthase of Bacillus anthracis (strain A0248).